Consider the following 715-residue polypeptide: Fatty acid oxidation complex subunit alpha (715 aa).

Positions 1-189 are enoyl-CoA hydratase/isomerase; sequence MIYQGETLSV…KVGAIDAVVA (189 aa). Asp-296 contacts substrate. The interval 311 to 715 is 3-hydroxyacyl-CoA dehydrogenase; it reads AKATRHAAVL…EMAAQGKTFY (405 aa). Residues Met-325, Asp-344, 401 to 403, Lys-408, and Ser-430 each bind NAD(+); that span reads VVE. His-451 serves as the catalytic For 3-hydroxyacyl-CoA dehydrogenase activity. Asn-454 contacts NAD(+). Positions 501 and 661 each coordinate substrate.

It in the N-terminal section; belongs to the enoyl-CoA hydratase/isomerase family. This sequence in the C-terminal section; belongs to the 3-hydroxyacyl-CoA dehydrogenase family. As to quaternary structure, heterotetramer of two alpha chains (FadB) and two beta chains (FadA).

It catalyses the reaction a (3S)-3-hydroxyacyl-CoA + NAD(+) = a 3-oxoacyl-CoA + NADH + H(+). It carries out the reaction a (3S)-3-hydroxyacyl-CoA = a (2E)-enoyl-CoA + H2O. The enzyme catalyses a 4-saturated-(3S)-3-hydroxyacyl-CoA = a (3E)-enoyl-CoA + H2O. The catalysed reaction is (3S)-3-hydroxybutanoyl-CoA = (3R)-3-hydroxybutanoyl-CoA. It catalyses the reaction a (3Z)-enoyl-CoA = a 4-saturated (2E)-enoyl-CoA. It carries out the reaction a (3E)-enoyl-CoA = a 4-saturated (2E)-enoyl-CoA. It functions in the pathway lipid metabolism; fatty acid beta-oxidation. Involved in the aerobic and anaerobic degradation of long-chain fatty acids via beta-oxidation cycle. Catalyzes the formation of 3-oxoacyl-CoA from enoyl-CoA via L-3-hydroxyacyl-CoA. It can also use D-3-hydroxyacyl-CoA and cis-3-enoyl-CoA as substrate. This Aeromonas salmonicida (strain A449) protein is Fatty acid oxidation complex subunit alpha.